The sequence spans 364 residues: Probable dual-specificity RNA methyltransferase RlmN (364 aa).

The Proton acceptor role is filled by E107. Residues 113 to 346 (HDYGNSVCVT…ATIRREQGSD (234 aa)) form the Radical SAM core domain. C120 and C351 form a disulfide bridge. Residues C127, C131, and C134 each contribute to the [4Fe-4S] cluster site. S-adenosyl-L-methionine-binding positions include 177-178 (GE), S209, 232-234 (SLH), and N308. Catalysis depends on C351, which acts as the S-methylcysteine intermediate.

It belongs to the radical SAM superfamily. RlmN family. Requires [4Fe-4S] cluster as cofactor.

It localises to the cytoplasm. The catalysed reaction is adenosine(2503) in 23S rRNA + 2 reduced [2Fe-2S]-[ferredoxin] + 2 S-adenosyl-L-methionine = 2-methyladenosine(2503) in 23S rRNA + 5'-deoxyadenosine + L-methionine + 2 oxidized [2Fe-2S]-[ferredoxin] + S-adenosyl-L-homocysteine. It carries out the reaction adenosine(37) in tRNA + 2 reduced [2Fe-2S]-[ferredoxin] + 2 S-adenosyl-L-methionine = 2-methyladenosine(37) in tRNA + 5'-deoxyadenosine + L-methionine + 2 oxidized [2Fe-2S]-[ferredoxin] + S-adenosyl-L-homocysteine. Functionally, specifically methylates position 2 of adenine 2503 in 23S rRNA and position 2 of adenine 37 in tRNAs. Confers resistance to some classes of antibiotics. In Staphylococcus haemolyticus (strain JCSC1435), this protein is Probable dual-specificity RNA methyltransferase RlmN.